A 260-amino-acid polypeptide reads, in one-letter code: Carbonic anhydrase 2 (260 aa).

Ser-2 carries the post-translational modification N-acetylserine. Ser-2 is modified (phosphoserine). The Alpha-carbonic anhydrase domain occupies 3-259 (HHWGYGEHNG…LKNRQVRVFP (257 aa)). His-64 (proton donor/acceptor) is an active-site residue. 3 residues coordinate Zn(2+): His-94, His-96, and His-119. A phosphoserine mark is found at Ser-165 and Ser-172. 198–199 (TN) is a binding site for substrate.

This sequence belongs to the alpha-carbonic anhydrase family. Interacts with SLC4A4 and SLC26A6. Interaction with SLC4A7 regulates SLC4A7 transporter activity. Zn(2+) is required as a cofactor.

It localises to the cytoplasm. Its subcellular location is the cell membrane. It catalyses the reaction hydrogencarbonate + H(+) = CO2 + H2O. The catalysed reaction is urea = cyanamide + H2O. With respect to regulation, inhibited by acetazolamide. Functionally, catalyzes the reversible hydration of carbon dioxide. Can also hydrate cyanamide to urea. Involved in the regulation of fluid secretion into the anterior chamber of the eye. Essential for bone resorption and osteoclast differentiation. Contributes to intracellular pH regulation in the duodenal upper villous epithelium during proton-coupled peptide absorption. Stimulates the chloride-bicarbonate exchange activity of SLC26A6. The protein is Carbonic anhydrase 2 (CA2) of Ovis aries (Sheep).